Reading from the N-terminus, the 860-residue chain is Alanine--tRNA ligase (860 aa).

His563, His567, Cys665, and His669 together coordinate Zn(2+).

This sequence belongs to the class-II aminoacyl-tRNA synthetase family. Requires Zn(2+) as cofactor.

It localises to the cytoplasm. It catalyses the reaction tRNA(Ala) + L-alanine + ATP = L-alanyl-tRNA(Ala) + AMP + diphosphate. Its function is as follows. Catalyzes the attachment of alanine to tRNA(Ala) in a two-step reaction: alanine is first activated by ATP to form Ala-AMP and then transferred to the acceptor end of tRNA(Ala). Also edits incorrectly charged Ser-tRNA(Ala) and Gly-tRNA(Ala) via its editing domain. The chain is Alanine--tRNA ligase from Vibrio cholerae serotype O1 (strain ATCC 39315 / El Tor Inaba N16961).